A 558-amino-acid chain; its full sequence is Phosphatidylserine lipase ABHD16A (558 aa).

The next 2 helical transmembrane spans lie at I60–F80 and V93–L113. Topologically, residues R114–L558 are cytoplasmic. An AB hydrolase-1 domain is found at L281 to L407. Catalysis depends on charge relay system residues S355, D430, and H507.

Belongs to the AB hydrolase superfamily. ABHD16 family.

The protein localises to the membrane. The enzyme catalyses 1-heptadecanoyl-2-(5Z,8Z,11Z,14Z-eicosatetraenoyl)-sn-glycero-3-phosphoserine + H2O = 1-heptadecanoyl-sn-glycero-3-phosphoserine + (5Z,8Z,11Z,14Z)-eicosatetraenoate + H(+). It carries out the reaction 1-hexadecanoyl-2-(9Z-octadecenoyl)-sn-glycero-3-phospho-L-serine + H2O = 1-hexadecanoyl-sn-glycero-3-phospho-L-serine + (9Z)-octadecenoate + H(+). It catalyses the reaction 1-octadecanoyl-2-(9Z,12Z-octadecadienoyl)-sn-glycero-3-phosphoserine + H2O = 1-octadecanoyl-sn-glycero-3-phosphoserine + (9Z,12Z)-octadecadienoate + H(+). The catalysed reaction is 1-heptadecanoyl-2-(5Z,8Z,11Z,14Z-eicosatetraenoyl)-sn-glycero-3-phosphocholine + H2O = 1-heptadecanoyl-sn-glycero-3-phosphocholine + (5Z,8Z,11Z,14Z)-eicosatetraenoate + H(+). The enzyme catalyses 1-hexadecanoyl-2-(9Z-octadecenoyl)-sn-glycero-3-phosphoglycerol + H2O = 1-hexadecanoyl-sn-glycero-3-phosphoglycerol + (9Z)-octadecenoate + H(+). It carries out the reaction 1-hexadecanoyl-2-(9Z-octadecenoyl)-sn-glycero-3-phospho-(1D-myo-inositol) + H2O = 1-hexadecanoyl-sn-glycero-3-phospho-(1D-myo-inositol) + (9Z)-octadecenoate + H(+). It catalyses the reaction 1-heptadecanoyl-2-(5Z,8Z,11Z,14Z-eicosatetraenoyl)-sn-glycero-3-phosphoethanolamine + H2O = 1-heptadecanoyl-sn-glycero-3-phosphoethanolamine + (5Z,8Z,11Z,14Z)-eicosatetraenoate + H(+). The catalysed reaction is 1-hexadecanoyl-2-(9Z-octadecenoyl)-sn-glycero-3-phospho-(1'-sn-glycerol) + H2O = 1-hexadecanoyl-sn-glycero-3-phospho-(1'-sn-glycerol) + (9Z)-octadecenoate + H(+). The enzyme catalyses Hydrolyzes glycerol monoesters of long-chain fatty acids.. It carries out the reaction 1-tetradecanoylglycerol + H2O = tetradecanoate + glycerol + H(+). It catalyses the reaction 2-hexadecanoylglycerol + H2O = glycerol + hexadecanoate + H(+). The catalysed reaction is 1-(9Z-octadecenoyl)-glycerol + H2O = glycerol + (9Z)-octadecenoate + H(+). The enzyme catalyses 2-(9Z-octadecenoyl)-glycerol + H2O = glycerol + (9Z)-octadecenoate + H(+). It carries out the reaction 2-(9Z,12Z-octadecadienoyl)-glycerol + H2O = (9Z,12Z)-octadecadienoate + glycerol + H(+). It catalyses the reaction 1-(5Z,8Z,11Z,14Z-eicosatetraenoyl)-glycerol + H2O = glycerol + (5Z,8Z,11Z,14Z)-eicosatetraenoate + H(+). The catalysed reaction is 2-(5Z,8Z,11Z,14Z-eicosatetraenoyl)-glycerol + H2O = glycerol + (5Z,8Z,11Z,14Z)-eicosatetraenoate + H(+). The enzyme catalyses prostaglandin D2-1-glycerol ester + H2O = prostaglandin D2 + glycerol + H(+). It carries out the reaction 2-glyceryl-15-deoxy-Delta(12,14)-prostaglandin J2 + H2O = 15-deoxy-Delta(12,14)-prostaglandin J2 + glycerol + H(+). It catalyses the reaction 1-(9Z,12Z-octadecadienoyl)-glycerol + H2O = (9Z,12Z)-octadecadienoate + glycerol + H(+). In terms of biological role, phosphatidylserine (PS) lipase that mediates the hydrolysis of phosphatidylserine to generate lysophosphatidylserine (LPS). LPS constitutes a class of signaling lipids that regulates immunological and neurological processes. Has no activity towards diacylglycerol, triacylglycerol or lysophosphatidylserine lipase. Also has monoacylglycerol lipase activity, with preference for 1-(9Z,12Z-octadecadienoyl)-glycerol (1-LG) and 2-glyceryl-15-deoxy-Delta(12,14)-prostaglandin J2 (15d-PGJ(2)-G). The protein is Phosphatidylserine lipase ABHD16A of Rattus norvegicus (Rat).